The chain runs to 292 residues: Glycine--tRNA ligase alpha subunit (292 aa).

It belongs to the class-II aminoacyl-tRNA synthetase family. In terms of assembly, tetramer of two alpha and two beta subunits.

It is found in the cytoplasm. It carries out the reaction tRNA(Gly) + glycine + ATP = glycyl-tRNA(Gly) + AMP + diphosphate. In Clostridioides difficile (strain 630) (Peptoclostridium difficile), this protein is Glycine--tRNA ligase alpha subunit.